A 99-amino-acid chain; its full sequence is Large ribosomal subunit protein bL25 (99 aa).

The protein belongs to the bacterial ribosomal protein bL25 family. Part of the 50S ribosomal subunit; part of the 5S rRNA/L5/L18/L25 subcomplex. Contacts the 5S rRNA. Binds to the 5S rRNA independently of L5 and L18.

Functionally, this is one of the proteins that binds to the 5S RNA in the ribosome where it forms part of the central protuberance. The polypeptide is Large ribosomal subunit protein bL25 (Nostoc sp. (strain PCC 7120 / SAG 25.82 / UTEX 2576)).